The primary structure comprises 249 residues: Coproheme decarboxylase (249 aa).

Residues R131, 145 to 149 (YPMDK), H172, and Q185 each bind Fe-coproporphyrin III. Y145 is a catalytic residue.

This sequence belongs to the ChdC family. Type 1 subfamily. Requires Fe-coproporphyrin III as cofactor.

The catalysed reaction is Fe-coproporphyrin III + 2 H2O2 + 2 H(+) = heme b + 2 CO2 + 4 H2O. The enzyme catalyses Fe-coproporphyrin III + H2O2 + H(+) = harderoheme III + CO2 + 2 H2O. It carries out the reaction harderoheme III + H2O2 + H(+) = heme b + CO2 + 2 H2O. It functions in the pathway porphyrin-containing compound metabolism; protoheme biosynthesis. Functionally, involved in coproporphyrin-dependent heme b biosynthesis. Catalyzes the decarboxylation of Fe-coproporphyrin III (coproheme) to heme b (protoheme IX), the last step of the pathway. The reaction occurs in a stepwise manner with a three-propionate intermediate. In Staphylococcus saprophyticus subsp. saprophyticus (strain ATCC 15305 / DSM 20229 / NCIMB 8711 / NCTC 7292 / S-41), this protein is Coproheme decarboxylase.